An 833-amino-acid polypeptide reads, in one-letter code: Leucine--tRNA ligase (833 aa).

Residues 41 to 52 (PYPSGAGLHVGH) carry the 'HIGH' region motif. The 'KMSKS' region motif lies at 610–614 (KMSKS). K613 is a binding site for ATP.

Belongs to the class-I aminoacyl-tRNA synthetase family.

Its subcellular location is the cytoplasm. The catalysed reaction is tRNA(Leu) + L-leucine + ATP = L-leucyl-tRNA(Leu) + AMP + diphosphate. This Streptococcus equi subsp. zooepidemicus (strain H70) protein is Leucine--tRNA ligase.